The following is a 561-amino-acid chain: Thymidine kinase (561 aa).

Composition is skewed to polar residues over residues 1–14 (MASN…TPRR) and 112–122 (LSSSNTASGLR). Disordered stretches follow at residues 1 to 22 (MASN…VPKA) and 34 to 122 (FLTQ…SGLR). ATP is bound at residue 245-252 (GCMAAGKT). The active-site Proton acceptor is the E272. Q310 provides a ligand contact to substrate. Position 400 (R400) interacts with ATP. Substrate is bound at residue R406.

This sequence belongs to the herpesviridae thymidine kinase family. As to quaternary structure, homodimer.

It carries out the reaction thymidine + ATP = dTMP + ADP + H(+). In terms of biological role, catalyzes the transfer of the gamma-phospho group of ATP to thymidine to generate dTMP in the salvage pathway of pyrimidine synthesis. The dTMP serves as a substrate for DNA polymerase during viral DNA replication. Allows the virus to be reactivated and to grow in non-proliferative cells lacking a high concentration of phosphorylated nucleic acid precursors. The protein is Thymidine kinase of Connochaetes taurinus (Blue wildebeest).